The following is a 75-amino-acid chain: uncharacterized protein (75 aa).

The Glutaredoxin domain occupies 1–75 (MIKIYSTPTC…KAEIDKLIEK (75 aa)). Cys-10 and Cys-13 are disulfide-bonded.

The protein belongs to the glutaredoxin family.

This is an uncharacterized protein from Clostridium pasteurianum.